A 902-amino-acid polypeptide reads, in one-letter code: Adhesion G-protein coupled receptor D1 (902 aa).

The N-terminal stretch at 1-25 is a signal peptide; that stretch reads MKKLLPLCCWHSWLLLFYCDFQVRG. Residues 26–598 lie on the Extracellular side of the membrane; sequence AHTRSHVHPG…GHQVALSSIS (573 aa). 15 N-linked (GlcNAc...) asparagine glycosylation sites follow: Asn68, Asn76, Asn83, Asn89, Asn121, Asn183, Asn217, Asn310, Asn330, Asn337, Asn347, Asn422, Asn504, Asn529, and Asn561. The region spanning 111–304 is the Pentraxin (PTX) domain; that stretch reads KGVTFLYYRK…VNTMAPTNAY (194 aa). The GAIN-B domain maps to 399–585; sequence QVAIVGSSSM…AILMQVVPLE (187 aa). 2 disulfide bridges follow: Cys538/Cys567 and Cys555/Cys569. A GPS region spans residues 538-585; the sequence is CAFLDFSSGEGIWSNQGCALTEGNLSYSICRCTHLTNFAILMQVVPLE. Residues 574–582 form a stachel region; sequence NFAILMQVV. Gln591 provides a ligand contact to 17beta-hydroxy-5alpha-androstan-3-one. The chain crosses the membrane as a helical span at residues 599–619; it reads YIGCSLSVLCLAITLVTFAVL. Topologically, residues 620 to 630 are cytoplasmic; the sequence is SSVSTIRNQRY. The chain crosses the membrane as a helical span at residues 631 to 651; it reads HIHANLSCAVLVAQVLLLISF. Topologically, residues 652–661 are extracellular; sequence RFEPGTAPCQ. Cys660 and Cys732 form a disulfide bridge. Residues 662 to 682 traverse the membrane as a helical segment; sequence VLAMLLHYFFLSAFAWMLVEG. Topologically, residues 683–702 are cytoplasmic; sequence LHLYSMVIKVFGSEDSKHRY. The helical transmembrane segment at 703 to 723 threads the bilayer; it reads YYGIGWGFPLLICIISIVFAM. Over 724 to 739 the chain is Extracellular; it reads DSYGTSKNCWLSLGNG. Residues 740–760 traverse the membrane as a helical segment; sequence AIWAFVAPALFIIVVNIGILI. Residues 761–788 lie on the Cytoplasmic side of the membrane; the sequence is AVTRVISQISAENYKIHGDPSAFKLTAK. Residues 789–809 form a helical membrane-spanning segment; it reads AVAVLLPILGTSWVFGVLAVN. The Extracellular portion of the chain corresponds to 810–812; sequence NQA. Residues 813–833 traverse the membrane as a helical segment; it reads MVFQYMFAILNSLQGFFIFLF. Over 834 to 902 the chain is Cytoplasmic; that stretch reads HCLLNSEVRA…SGHRVDLSAV (69 aa). Residues 865–902 form a disordered region; sequence KPFSSDIMNGTRPATGSTRLSPWDKSSHSGHRVDLSAV. Over residues 870-884 the composition is skewed to polar residues; the sequence is DIMNGTRPATGSTRL. The segment covering 889–902 has biased composition (basic and acidic residues); the sequence is KSSHSGHRVDLSAV.

Belongs to the G-protein coupled receptor 2 family. Adhesion G-protein coupled receptor (ADGR) subfamily. As to quaternary structure, heterodimer of 2 chains generated by proteolytic processing; the large extracellular N-terminal fragment and the membrane-bound C-terminal fragment predominantly remain associated and non-covalently linked. Interacts with ESYT1; interaction takes place in absence of cytosolic calcium and inhibits the G protein-coupled receptor activity of ADGRD1. In terms of processing, autoproteolytically processed at the GPS region of the GAIN-B domain; this cleavage modulates receptor activity. Cleavage takes place early in the secretory pathway before N-glycosylation.

The protein localises to the cell membrane. Its activity is regulated as follows. Forms a heterodimer of 2 chains generated by proteolytic processing that remain associated through non-covalent interactions mediated by the GAIN-B domain. In the inactivated receptor, the Stachel sequence (also named stalk) is embedded in the GAIN-B domain, where it adopts a beta-strand conformation. On activation, the Stachel moves into the 7 transmembrane region and adopts a twisted hook-shaped configuration that forms contacts within the receptor, leading to coupling of a G-alpha protein, which activates signaling. The cleaved GAIN-B and N-terminal domains can then dissociate from the rest of the receptor. Interaction with ESYT1 in absence of cytosolic calcium inhibits the G protein-coupled receptor activity; interaction and inhibition is relieved when cytosolic calcium increases. Its function is as follows. Adhesion G-protein coupled receptor (aGPCR) for androgen hormone 5alpha-dihydrotestosterone (5alpha-DHT), also named 17beta-hydroxy-5alpha-androstan-3-one, the most potent hormone among androgens. Also activated by methenolone drug. Ligand binding causes a conformation change that triggers signaling via guanine nucleotide-binding proteins (G proteins) and modulates the activity of downstream effectors, such as adenylate cyclase. ADGRD1 is coupled to G(s) G proteins and mediates activation of adenylate cyclase activity. Acts as a 5alpha-DHT receptor in muscle cells, thereby increasing intracellular cyclic AMP (cAMP) levels and enhancing muscle strength. The sequence is that of Adhesion G-protein coupled receptor D1 (ADGRD1) from Bos taurus (Bovine).